Here is a 132-residue protein sequence, read N- to C-terminus: Pro-MCH 2 (132 aa).

The signal sequence occupies residues 1 to 24 (MRDSVLSVIFALALFLECYTPSMA). Residues C120 and C129 are joined by a disulfide bond.

The protein belongs to the melanin-concentrating hormone family. As to expression, pituitary gland. Produced in neurons of lateral basal hypothalamus which project both to the brain and to the neural lobe of the pituitary gland from where MCH is released.

Its function is as follows. Plays a role in skin pigmentation by antagonizing the action of melanotropin alpha. Induces melanin concentration within the melanophores. May participate in the control of the hypothalamo-pituitary adrenal gland axis by inhibiting the release of ACTH. The polypeptide is Pro-MCH 2 (mch2) (Oncorhynchus keta (Chum salmon)).